The following is a 706-amino-acid chain: Polyribonucleotide nucleotidyltransferase (706 aa).

Mg(2+)-binding residues include aspartate 485 and aspartate 491. The 60-residue stretch at 552–611 (PRMLKMKIHPDKIREVIGSGGKTINKIIEDTGVKIDIENDGTIFIAAQTQEAGELALSII) folds into the KH domain. Residues 621 to 689 (GDIFKGKVIK…QQGKVSLSRK (69 aa)) form the S1 motif domain.

It belongs to the polyribonucleotide nucleotidyltransferase family. Requires Mg(2+) as cofactor.

Its subcellular location is the cytoplasm. It carries out the reaction RNA(n+1) + phosphate = RNA(n) + a ribonucleoside 5'-diphosphate. Functionally, involved in mRNA degradation. Catalyzes the phosphorolysis of single-stranded polyribonucleotides processively in the 3'- to 5'-direction. The polypeptide is Polyribonucleotide nucleotidyltransferase (Alkaliphilus oremlandii (strain OhILAs) (Clostridium oremlandii (strain OhILAs))).